The following is a 416-amino-acid chain: Putative competence-damage inducible protein (416 aa).

It belongs to the CinA family.

This chain is Putative competence-damage inducible protein, found in Geobacillus sp. (strain WCH70).